The following is a 497-amino-acid chain: Dol-P-Man:Man(7)GlcNAc(2)-PP-Dol alpha-1,6-mannosyltransferase (497 aa).

Transmembrane regions (helical) follow at residues Phe10–Met30, Phe71–Leu91, Gly92–Ser112, Phe125–Phe145, Ile154–Pro174, Phe178–Gly198, and Tyr215–Trp235. N-linked (GlcNAc...) asparagine glycosylation is present at Asn253. 4 helical membrane passes run Ile263 to Gly285, Val292 to Lys312, Phe316 to Tyr336, and Leu346 to Phe366. The N-linked (GlcNAc...) asparagine glycan is linked to Asn435.

The protein belongs to the glycosyltransferase 22 family.

The protein localises to the endoplasmic reticulum membrane. The catalysed reaction is an alpha-D-Man-(1-&gt;2)-alpha-D-Man-(1-&gt;2)-alpha-D-Man-(1-&gt;3)-[alpha-D-Man-(1-&gt;2)-alpha-D-Man-(1-&gt;3)-alpha-D-Man-(1-&gt;6)]-beta-D-Man-(1-&gt;4)-beta-D-GlcNAc-(1-&gt;4)-alpha-D-GlcNAc-diphospho-di-trans,poly-cis-dolichol + a di-trans,poly-cis-dolichyl beta-D-mannosyl phosphate = an alpha-D-Man-(1-&gt;2)-alpha-D-Man-(1-&gt;2)-alpha-D-Man-(1-&gt;3)-[alpha-D-Man-(1-&gt;2)-alpha-D-Man-(1-&gt;3)-[alpha-D-Man-(1-&gt;6)]-alpha-D-Man-(1-&gt;6)]-beta-D-Man-(1-&gt;4)-beta-D-GlcNAc-(1-&gt;4)-alpha-D-GlcNAc-diphospho-di-trans,poly-cis-dolichol + a di-trans,poly-cis-dolichyl phosphate + H(+). It participates in protein modification; protein glycosylation. Its function is as follows. Mannosyltransferase that operates in the biosynthetic pathway of dolichol-linked oligosaccharides, the glycan precursors employed in protein asparagine (N)-glycosylation. The assembly of dolichol-linked oligosaccharides begins on the cytosolic side of the endoplasmic reticulum membrane and finishes in its lumen. The sequential addition of sugars to dolichol pyrophosphate produces dolichol-linked oligosaccharides containing fourteen sugars, including two GlcNAcs, nine mannoses and three glucoses. Once assembled, the oligosaccharide is transferred from the lipid to nascent proteins by oligosaccharyltransferases. In the lumen of the endoplasmic reticulum, adds the eighth mannose residue in an alpha-1,6 linkage onto Man(7)GlcNAc(2)-PP-dolichol to produce Man(8)GlcNAc(2)-PP-dolichol. This chain is Dol-P-Man:Man(7)GlcNAc(2)-PP-Dol alpha-1,6-mannosyltransferase (ALG12), found in Arabidopsis thaliana (Mouse-ear cress).